Here is a 281-residue protein sequence, read N- to C-terminus: Probable endonuclease 4 (281 aa).

Zn(2+) contacts are provided by His-69, His-109, Glu-145, Asp-179, His-182, His-216, Asp-229, His-231, and Glu-261.

This sequence belongs to the AP endonuclease 2 family. It depends on Zn(2+) as a cofactor.

It carries out the reaction Endonucleolytic cleavage to 5'-phosphooligonucleotide end-products.. In terms of biological role, endonuclease IV plays a role in DNA repair. It cleaves phosphodiester bonds at apurinic or apyrimidinic (AP) sites, generating a 3'-hydroxyl group and a 5'-terminal sugar phosphate. In Glaesserella parasuis serovar 5 (strain SH0165) (Haemophilus parasuis), this protein is Probable endonuclease 4.